A 389-amino-acid polypeptide reads, in one-letter code: Ecto-ADP-ribosyltransferase 3 (389 aa).

The N-terminal stretch at 1 to 26 (MKTGHFEIVTMLLATMILVDIFQVKA) is a signal peptide. Cys43 and Cys256 are oxidised to a cystine. The region spanning 64–251 (QQLDTVWENA…LILQSINKTC (188 aa)) is the TR mART core domain. Tyr101 and Arg163 together coordinate NAD(+). Asn248 is a glycosylation site (N-linked (GlcNAc...) asparagine). 3 consecutive repeat copies span residues 283–292 (GEKNQKLEDH), 293–302 (SEKNWKLEDH), and 303–312 (GEKNQKLEDH). Residues 283–312 (GEKNQKLEDHSEKNWKLEDHGEKNQKLEDH) are 3 X 10 AA tandem repeats of [GS]-E-K-N-[QW]-K-L-E-D-H. The tract at residues 325–362 (MKIPEPFPLPEDKSQGNINNPTPGPVPVPGPKSHPSAS) is disordered. O-linked (GalNAc...) threonine glycosylation is present at Thr346. Pro residues predominate over residues 346–356 (TPGPVPVPGPK). The GPI-anchor amidated serine moiety is linked to residue Ser362. The propeptide at 363-389 (SGKLLLPQFGMVIILISVSAINLFVAL) is removed in mature form.

Belongs to the Arg-specific ADP-ribosyltransferase family. O-glycosylated with core 1 or possibly core 8 glycans. Testis specific.

It localises to the cell membrane. It carries out the reaction L-arginyl-[protein] + NAD(+) = N(omega)-(ADP-D-ribosyl)-L-arginyl-[protein] + nicotinamide + H(+). This chain is Ecto-ADP-ribosyltransferase 3 (ART3), found in Homo sapiens (Human).